The sequence spans 434 residues: Isocitrate lyase (434 aa).

Substrate is bound at residue 91-93 (SGW). Position 157 (D157) interacts with Mg(2+). Residue C195 is the Proton acceptor of the active site. Residues 196–197 (GH), R232, 317–321 (NCSPS), and T351 contribute to the substrate site.

The protein belongs to the isocitrate lyase/PEP mutase superfamily. Isocitrate lyase family. In terms of assembly, homotetramer. It depends on Mg(2+) as a cofactor.

The enzyme catalyses D-threo-isocitrate = glyoxylate + succinate. It participates in carbohydrate metabolism; glyoxylate cycle; (S)-malate from isocitrate: step 1/2. In terms of biological role, involved in the metabolic adaptation in response to environmental changes. Catalyzes the reversible formation of succinate and glyoxylate from isocitrate, a key step of the glyoxylate cycle, which operates as an anaplerotic route for replenishing the tricarboxylic acid cycle during growth on fatty acid substrates. The polypeptide is Isocitrate lyase (aceA) (Escherichia coli O6:H1 (strain CFT073 / ATCC 700928 / UPEC)).